A 3563-amino-acid polypeptide reads, in one-letter code: D-lysergyl-peptide-synthetase subunit 1 (3563 aa).

An adenylation (A) domain 1 region spans residues 307–706 (SCSPRPNPQA…LGRKDDQVKI (400 aa)). The region spanning 844-921 (EPKSDREKLL…EIVIVSTSAT (78 aa)) is the Carrier 1 domain. Ser-881 carries the O-(pantetheine 4'-phosphoryl)serine modification. A condensation (C) domain 1 region spans residues 963-1354 (EDIYPCTHLQ…EHILTEIHSN (392 aa)). The tract at residues 1397 to 1804 (QEKCQAQPDA…RRKDAQVKIR (408 aa)) is adenylation (A) domain 2. The region spanning 1944 to 2020 (PPSNATEHEI…KLALARGVTQ (77 aa)) is the Carrier 2 domain. Position 1981 is an O-(pantetheine 4'-phosphoryl)serine (Ser-1981). Residues 2067–2486 (ERIYPCSPIQ…ALPVLDEDQM (420 aa)) are condensation (C) domain 2. Residues 2511 to 2909 (QCIRCPDSPS…GRNDDQVKVR (399 aa)) form an adenylation (A) domain 3 region. Residues 3025-3104 (PPRTALEAEL…RFGSYRRAGA (80 aa)) enclose the Carrier 3 domain. At Ser-3064 the chain carries O-(pantetheine 4'-phosphoryl)serine. The cyclization (Cyc) domain stretch occupies residues 3166-3451 (LYFSKPMASE…VAKSTTWSSD (286 aa)).

The protein belongs to the NRP synthetase family.

Its pathway is alkaloid biosynthesis; ergot alkaloid biosynthesis. Functionally, D-lysergyl-peptide-synthetase subunit 1; part of the gene cluster that mediates the biosynthesis of fungal ergot alkaloid. DmaW catalyzes the first step of ergot alkaloid biosynthesis by condensing dimethylallyl diphosphate (DMAP) and tryptophan to form 4-dimethylallyl-L-tryptophan. The second step is catalyzed by the methyltransferase easF that methylates 4-dimethylallyl-L-tryptophan in the presence of S-adenosyl-L-methionine, resulting in the formation of 4-dimethylallyl-L-abrine. The catalase easC and the FAD-dependent oxidoreductase easE then transform 4-dimethylallyl-L-abrine to chanoclavine-I which is further oxidized by easD in the presence of NAD(+), resulting in the formation of chanoclavine-I aldehyde. Agroclavine dehydrogenase easG then mediates the conversion of chanoclavine-I aldehyde to agroclavine via a non-enzymatic adduct reaction: the substrate is an iminium intermediate that is formed spontaneously from chanoclavine-I aldehyde in the presence of glutathione. The presence of easA is not required to complete this reaction. Further conversion of agroclavine to paspalic acid is a two-step process involving oxidation of agroclavine to elymoclavine and of elymoclavine to paspalic acid, the second step being performed by the elymoclavine oxidase cloA. Paspalic acid is then further converted to D-lysergic acid. Ergopeptines are assembled from D-lysergic acid and three different amino acids by the D-lysergyl-peptide-synthetases composed each of a monomudular and a trimodular nonribosomal peptide synthetase subunit. LpsB and lpsC encode the monomodular subunits responsible for D-lysergic acid activation and incorporation into the ergopeptine backbone. LpsA1 and A2 subunits encode the trimodular nonribosomal peptide synthetase assembling the tripeptide portion of ergopeptines. LpsA1 is responsible for formation of the major ergopeptine, ergotamine, and lpsA2 for alpha-ergocryptine, the minor ergopeptine of the total alkaloid mixture elaborated by C.purpurea. D-lysergyl-tripeptides are assembled by the nonribosomal peptide synthetases and released as N-(D-lysergyl-aminoacyl)-lactams. Cyclolization of the D-lysergyl-tripeptides is performed by the Fe(2+)/2-ketoglutarate-dependent dioxygenase easH which introduces a hydroxyl group into N-(D-lysergyl-aminoacyl)-lactam at alpha-C of the aminoacyl residue followed by spontaneous condensation with the terminal lactam carbonyl group. The protein is D-lysergyl-peptide-synthetase subunit 1 of Claviceps purpurea (Ergot fungus).